The sequence spans 271 residues: Regulatory protein RecX (271 aa).

Belongs to the RecX family.

It is found in the cytoplasm. In terms of biological role, modulates RecA activity. This chain is Regulatory protein RecX, found in Geobacillus sp. (strain WCH70).